The chain runs to 387 residues: Phosphoglycerate kinase (387 aa).

Residues 21-23 (DLN), Arg-36, 59-62 (HLGR), Arg-113, and Arg-146 contribute to the substrate site. ATP contacts are provided by residues Lys-197, Glu-314, and 340-343 (GGDT).

The protein belongs to the phosphoglycerate kinase family. In terms of assembly, monomer.

Its subcellular location is the cytoplasm. The enzyme catalyses (2R)-3-phosphoglycerate + ATP = (2R)-3-phospho-glyceroyl phosphate + ADP. It functions in the pathway carbohydrate degradation; glycolysis; pyruvate from D-glyceraldehyde 3-phosphate: step 2/5. This is Phosphoglycerate kinase from Pectobacterium carotovorum subsp. carotovorum (strain PC1).